The following is a 22-amino-acid chain: Mu-conotoxin GIIIC (22 aa).

Disulfide bonds link C3–C15, C4–C20, and C10–C21. A 4-hydroxyproline mark is found at P6, P7, and P17. A22 carries the post-translational modification Alanine amide.

This sequence belongs to the conotoxin M superfamily. As to expression, expressed by the venom duct.

It is found in the secreted. Functionally, mu-conotoxins block voltage-gated sodium channels (Nav). This toxin shows potent activity on Nav1.4/SCN4A (IC(50)=286 nM), and weak activity on mNav1.6/SCN8A. This Conus geographus (Geography cone) protein is Mu-conotoxin GIIIC.